We begin with the raw amino-acid sequence, 413 residues long: Hibernation-specific plasma protein HP-55 (413 aa).

The first 24 residues, 1–24 (MPSSISWGLLLLAALSCLGPGSLA), serve as a signal peptide directing secretion. At Gln25 the chain carries Pyrrolidone carboxylic acid. N-linked (GlcNAc...) asparagine glycans are attached at residues Asn65, Asn102, Asn165, and Asn266. Positions 368 to 387 (GGTVLGAEAMLQAPIMKFDR) are RCL.

It belongs to the serpin family. In terms of assembly, plasma proteins HP-20, HP-25, HP-27 and HP-55 form a 140 kDa complex via disulfide bonds in the plasma. Post-translationally, the N-terminus is blocked. In terms of tissue distribution, plasma; synthesized in the liver.

The protein resides in the secreted. Functionally, protease inhibitor. This is Hibernation-specific plasma protein HP-55 from Tamias sibiricus (Siberian chipmunk).